A 305-amino-acid polypeptide reads, in one-letter code: Methionyl-tRNA formyltransferase (305 aa).

Residue serine 111–proline 114 participates in (6S)-5,6,7,8-tetrahydrofolate binding.

It belongs to the Fmt family.

The catalysed reaction is L-methionyl-tRNA(fMet) + (6R)-10-formyltetrahydrofolate = N-formyl-L-methionyl-tRNA(fMet) + (6S)-5,6,7,8-tetrahydrofolate + H(+). Its function is as follows. Attaches a formyl group to the free amino group of methionyl-tRNA(fMet). The formyl group appears to play a dual role in the initiator identity of N-formylmethionyl-tRNA by promoting its recognition by IF2 and preventing the misappropriation of this tRNA by the elongation apparatus. The sequence is that of Methionyl-tRNA formyltransferase from Helicobacter pylori (strain HPAG1).